Consider the following 472-residue polypeptide: MDVGGALDLYGCSVNVYNAILIFIWVLFLWETYINLRQLKVAKRVTESPEEIKCLMNDVDFDKSRRYAIDKMNFDIVSGFYNILSLSAVLYFQLIAWAWHKSQEHMLFVCSYAPRSFGTTEGSEILFSLLFTVYVALFQFFESLPWSYYRHFVIEERYGFNKQTIGFFIKDRLKSLAVGLVIGLPIISMLVWIIKAGGHYFYIYAYGFTFVVSFIIMFIYPEFIAPIFDRYEHFPDCELRKKIEELAASIEFPLKKLYVVEGSKRSSHSNAYFYGFGKNKRIVLFDTLIKGFKMPGVEADSSANADESSDETQNRGCGDDEEILATLAHELGHWKLKHMTFNLIIAQINIFFMFFAFGQLINVDQLFVDFGFPPSTAPILIRLIVVFQFIFMPYSSVLEFLMTMLSRKFEFQADAFAVSLKSGEKLKSALLVLTKDNLSFPVYDWLYSMCNHSHPPIIERLAAIDAKMGKEK.

The Lumenal portion of the chain corresponds to 1 to 8; the sequence is MDVGGALD. The chain crosses the membrane as a helical span at residues 9–29; sequence LYGCSVNVYNAILIFIWVLFL. Topologically, residues 30 to 75 are cytoplasmic; that stretch reads WETYINLRQLKVAKRVTESPEEIKCLMNDVDFDKSRRYAIDKMNFD. A helical transmembrane segment spans residues 76 to 96; that stretch reads IVSGFYNILSLSAVLYFQLIA. The Lumenal portion of the chain corresponds to 97–124; it reads WAWHKSQEHMLFVCSYAPRSFGTTEGSE. The helical transmembrane segment at 125–145 threads the bilayer; that stretch reads ILFSLLFTVYVALFQFFESLP. Residues 146-175 lie on the Cytoplasmic side of the membrane; the sequence is WSYYRHFVIEERYGFNKQTIGFFIKDRLKS. A helical transmembrane segment spans residues 176–196; it reads LAVGLVIGLPIISMLVWIIKA. The Lumenal portion of the chain corresponds to 197 to 207; the sequence is GGHYFYIYAYG. Residues 208-228 form a helical membrane-spanning segment; sequence FTFVVSFIIMFIYPEFIAPIF. Over 229–340 the chain is Cytoplasmic; sequence DRYEHFPDCE…LGHWKLKHMT (112 aa). His329 is a Zn(2+) binding site. The active site involves Glu330. His333 is a Zn(2+) binding site. Residues 341-361 form a helical membrane-spanning segment; the sequence is FNLIIAQINIFFMFFAFGQLI. The Lumenal segment spans residues 362-382; it reads NVDQLFVDFGFPPSTAPILIR. Residues 383–403 form a helical membrane-spanning segment; that stretch reads LIVVFQFIFMPYSSVLEFLMT. The Cytoplasmic segment spans residues 404 to 472; it reads MLSRKFEFQA…AIDAKMGKEK (69 aa). Glu410 is a binding site for Zn(2+). Catalysis depends on Asp414, which acts as the Proton donor.

Belongs to the peptidase M48A family. As to quaternary structure, homodimer; disulfide-linked. It depends on Zn(2+) as a cofactor.

It is found in the endoplasmic reticulum membrane. It catalyses the reaction Hydrolyzes the peptide bond -P2-(S-farnesyl or geranylgeranyl)C-P1'-P2'-P3'-COOH where P1' and P2' are amino acids with aliphatic side chains and P3' is any C-terminal residue.. Inhibited by ethylenediaminetetraacetic acid (EDTA) but not by serine, aspartic or cysteine protease inhibitors. Inhibited by high concentration of Zn(2+) (&gt; 0.1 mM). In terms of biological role, zinc-dependent metalloproteinase. Proteolytically removes the C-terminal three residues of farnesylated proteins. The sequence is that of CAAX prenyl protease 1 homolog from Taenia solium (Pork tapeworm).